The primary structure comprises 713 residues: Polyphosphate kinase (713 aa).

N63 contacts ATP. The Mg(2+) site is built by R394 and R424. H454 serves as the catalytic Phosphohistidine intermediate. Positions 487, 583, and 611 each coordinate ATP.

It belongs to the polyphosphate kinase 1 (PPK1) family. It depends on Mg(2+) as a cofactor. Post-translationally, an intermediate of this reaction is the autophosphorylated ppk in which a phosphate is covalently linked to a histidine residue through a N-P bond.

The enzyme catalyses [phosphate](n) + ATP = [phosphate](n+1) + ADP. Catalyzes the reversible transfer of the terminal phosphate of ATP to form a long-chain polyphosphate (polyP). The chain is Polyphosphate kinase from Prosthecochloris aestuarii (strain DSM 271 / SK 413).